The sequence spans 210 residues: Syntaxin-binding protein 6 (210 aa).

S2 is subject to N-acetylserine. In terms of domain architecture, v-SNARE coiled-coil homology spans 151–210 (GNSILHSAADSVTSAVQKASQALNERGERLGRAEEKTEDLKNSAQQFAETAHKLAMKHKC).

In terms of assembly, part of a ternary complex containing SNAP25 and STX1A that can be dissociated by NAPA and NSF. Interacts with STX4A.

It localises to the cytoplasm. Its subcellular location is the membrane. In terms of biological role, forms non-fusogenic complexes with SNAP25 and STX1A and may thereby modulate the formation of functional SNARE complexes and exocytosis. The protein is Syntaxin-binding protein 6 (STXBP6) of Bos taurus (Bovine).